The following is a 282-amino-acid chain: E3 ubiquitin-protein ligase SIAH1 (282 aa).

The segment covering 1 to 17 (MSRQTATALPTGTSKCP) has biased composition (polar residues). Residues 1–22 (MSRQTATALPTGTSKCPPSQRV) are disordered. Ser19 is modified (phosphoserine; by ATM and ATR). Residues 41-76 (CPVCFDYVLPPILQCQSGHLVCSNCRPKLTCCPTCR) form an RING-type zinc finger. The SBD stretch occupies residues 90-282 (VANSVLFPCK…LGINVTISMC (193 aa)). The SIAH-type zinc-finger motif lies at 93–153 (SVLFPCKYAS…VMPHLMHQHK (61 aa)). Zn(2+) contacts are provided by Cys98, Cys105, His117, Cys121, Cys128, Cys135, His147, and His152.

This sequence belongs to the SINA (Seven in absentia) family. As to quaternary structure, homodimer. Interacts with group 1 glutamate receptors GRM1 and GRM5. Interacts with DAB1, which may inhibit its activity. Interacts with UBE2E2. Interacts with PEG3. Interacts with GAPDH; leading to stabilize SIAH1. Component of some large E3 complex composed of UBE2D1, SIAH1, CACYBP/SIP, SKP1, APC and TBL1X. Interacts with UBE2I. Interacts with alpha-tubulin. Interacts with PEG10, which may inhibit its activity. Interacts with KHDRBS3. Interacts with SNCAIP. Interacts with HIPK2; the interaction is promoted by DAZAP2 and results in SIAH1-mediated ubiquitination and subsequent proteasomal degradation of HIPK2. Interacts with DAZAP2; the interaction is decreased following phosphorylation of DAZAP2 by HIPK2. Interacts with Bassoon/BSN and Piccolo/PLCO; these interactions negatively regulate SIAH1 E3 ligase activity. Interacts with DCC. Interacts with AXIN1; catalyzes AXIN1 ubiquitination and subsequent proteasome-mediated ubiquitin-dependent degradation. Phosphorylated on Ser-19 by ATM and ATR. This phosphorylation disrupts SIAH1 interaction with HIPK2, and subsequent proteasomal degradation of HIPK2. Widely expressed at a low level. Down-regulated in advanced hepatocellular carcinomas.

It localises to the cytoplasm. The protein localises to the nucleus. The enzyme catalyses S-ubiquitinyl-[E2 ubiquitin-conjugating enzyme]-L-cysteine + [acceptor protein]-L-lysine = [E2 ubiquitin-conjugating enzyme]-L-cysteine + N(6)-ubiquitinyl-[acceptor protein]-L-lysine.. The protein operates within protein modification; protein ubiquitination. With respect to regulation, inhibited by interaction with SNCAIP (isoform 2, but not isoform 1). May be inhibited by interaction with PEG10. Functionally, E3 ubiquitin-protein ligase that mediates ubiquitination and subsequent proteasomal degradation of target proteins. E3 ubiquitin ligases accept ubiquitin from an E2 ubiquitin-conjugating enzyme in the form of a thioester and then directly transfers the ubiquitin to targeted substrates. Mediates E3 ubiquitin ligase activity either through direct binding to substrates or by functioning as the essential RING domain subunit of larger E3 complexes. Triggers the ubiquitin-mediated degradation of many substrates, including proteins involved in transcription regulation (ELL2, MYB, POU2AF1, PML and RBBP8), a cell surface receptor (DCC), the cell-surface receptor-type tyrosine kinase FLT3, the cytoplasmic signal transduction molecules (KLF10/TIEG1 and NUMB), an antiapoptotic protein (BAG1), a microtubule motor protein (KIF22), a protein involved in synaptic vesicle function in neurons (SYP), a structural protein (CTNNB1) and SNCAIP. Confers constitutive instability to HIPK2 through proteasomal degradation. It is thereby involved in many cellular processes such as apoptosis, tumor suppression, cell cycle, axon guidance, transcription regulation, spermatogenesis and TNF-alpha signaling. Has some overlapping function with SIAH2. Induces apoptosis in cooperation with PEG3. Upon nitric oxid (NO) generation that follows apoptotic stimulation, interacts with S-nitrosylated GAPDH, mediating the translocation of GAPDH to the nucleus. GAPDH acts as a stabilizer of SIAH1, facilitating the degradation of nuclear proteins. Mediates ubiquitination and degradation of EGLN2 and EGLN3 in response to the unfolded protein response (UPR), leading to their degradation and subsequent stabilization of ATF4. Also part of the Wnt signaling pathway in which it mediates the Wnt-induced ubiquitin-mediated proteasomal degradation of AXIN1. This Homo sapiens (Human) protein is E3 ubiquitin-protein ligase SIAH1 (SIAH1).